We begin with the raw amino-acid sequence, 180 residues long: Large ribosomal subunit protein uL6 (180 aa).

This sequence belongs to the universal ribosomal protein uL6 family. Part of the 50S ribosomal subunit.

Its function is as follows. This protein binds to the 23S rRNA, and is important in its secondary structure. It is located near the subunit interface in the base of the L7/L12 stalk, and near the tRNA binding site of the peptidyltransferase center. The sequence is that of Large ribosomal subunit protein uL6 from Thermus thermophilus (strain ATCC BAA-163 / DSM 7039 / HB27).